We begin with the raw amino-acid sequence, 282 residues long: Cuticle collagen 8 (282 aa).

An N-terminal signal peptide occupies residues 1 to 24 (MLVCVFVALYTMMGLLTDIKQLQS). A disordered region spans residues 86 to 282 (GPKSEGCPAG…CPCPGRSYKA (197 aa)). Triple-helical region stretches follow at residues 95–124 (GPPG…PGVI) and 141–269 (GRPG…PGPD). Gly residues predominate over residues 170–180 (TGGQGGPGEQG). Over residues 214-224 (PPGPRGPPGPE) the composition is skewed to pro residues. The segment covering 225-234 (GNPGGAGEDG) has biased composition (gly residues). Residues 235–244 (NQGPVGHPGV) show a composition bias toward low complexity.

It belongs to the cuticular collagen family. In terms of assembly, collagen polypeptide chains are complexed within the cuticle by disulfide bonds and other types of covalent cross-links.

In terms of biological role, nematode cuticles are composed largely of collagen-like proteins. The cuticle functions both as an exoskeleton and as a barrier to protect the worm from its environment. The polypeptide is Cuticle collagen 8 (col-8) (Caenorhabditis elegans).